Here is a 495-residue protein sequence, read N- to C-terminus: Oxidoreductase AflY (495 aa).

Positions 1 to 22 (MGSHAPAVAGKPDPKKGPYQAT) are disordered.

This sequence belongs to the questin oxidase family.

It participates in mycotoxin biosynthesis; aflatoxin biosynthesis. Its function is as follows. Oxidoreductase; part of the gene cluster that mediates the biosynthesis of aflatoxins, a group of polyketide-derived furanocoumarins, and part of the most toxic and carcinogenic compounds among the known mycotoxins. The four major aflatoxins produced by A.parasiticus are aflatoxin B1 (AFB1), aflatoxin B2 (AFB2), aflatoxin G1 (AFG1) and aflatoxin G2 (AFG2). Within the aflatoxin pathway, the oxidoreductase aflY seems to be involved in the conversion of versicolorin A (VERA) to demethylsterigmatocystin (DMST), through probable Baeyer-Villiger oxidation required for the formation of the xanthone ring. The biosynthesis of aflatoxins begins with the norsolorinic acid synthase aflC that combines a hexanoyl starter unit produced by the fatty acid synthase aflA/aflB and 7 malonyl-CoA extender units to synthesize the precursor NOR. The second step is the conversion of NOR to averantin and requires the norsolorinic acid ketoreductase aflD, which catalyzes the dehydration of norsolorinic acid to form (1'S)-averantin. The norsolorinic acid reductases aflE and aflF may also play a role in the conversion of NOR to AVN. The cytochrome P450 monooxygenase aflG then catalyzes the hydroxylation of AVN to 5'hydroxyaverantin (HAVN). The next step is performed by the 5'-hydroxyaverantin dehydrogenase aflH that transforms HAVN to 5'-oxoaverantin (OAVN) which is further converted to averufin (AVF) by aflK that plays a dual role in the pathway, as a 5'-oxoaverantin cyclase that mediates conversion of 5'-oxoaverantin, as well as a versicolorin B synthase in a later step in the pathway. The averufin oxidase aflI catalyzes the conversion of AVF to versiconal hemiacetal acetate (VHA). VHA is then the substrate for the versiconal hemiacetal acetate esterase aflJ to yield versiconal (VAL). Versicolorin B synthase aflK then converts VAL to versicolorin B (VERB) by closing the bisfuran ring of aflatoxin which is required for DNA-binding, thus giving to aflatoxin its activity as a mutagen. Then, the activity of the versicolorin B desaturase aflL leads to versicolorin A (VERA). A branch point starts from VERB since it can also be converted to dihydrodemethylsterigmatocystin (DMDHST), probably also by aflL, VERA being a precursor for aflatoxins B1 and G1, and DMDHST for aflatoxins B2 and G2. Next, the versicolorin reductase aflM and the cytochrome P450 monooxygenase aflN are involved in conversion of VERA to demethylsterigmatocystin (DMST). AflX and aflY seem also involved in this step, through probable aflX-mediated epoxide ring-opening step following versicolorin A oxidation and aflY-mediated Baeyer-Villiger oxidation required for the formation of the xanthone ring. The methyltransferase aflO then leads to the modification of DMST to sterigmatocystin (ST), and of DMDHST to dihydrosterigmatocystin (DHST). Both ST and DHST are then substrates of the O-methyltransferase aflP to yield O-methylsterigmatocystin (OMST) and dihydro-O-methylsterigmatocystin (DHOMST), respectively. Finally OMST is converted to aflatoxins B1 and G1, and DHOMST to aflatoxins B2 and G2, via the action of several enzymes including O-methylsterigmatocystin oxidoreductase aflQ, the cytochrome P450 monooxygenase aflU, but also the NADH-dependent flavin oxidoreductase nadA which is specifically required for the synthesis of AFG1. The sequence is that of Oxidoreductase AflY from Aspergillus parasiticus (strain ATCC 56775 / NRRL 5862 / SRRC 143 / SU-1).